The primary structure comprises 490 residues: GTPase Der (490 aa).

EngA-type G domains lie at 3–167 (FTLA…DAFE) and 203–378 (LQVA…EVWN). Residues 9 to 16 (GRPNVGKS), 56 to 60 (DTAGL), 119 to 122 (NKAE), 209 to 216 (GRPNAGKS), 256 to 260 (DTAGM), and 321 to 324 (NKWD) contribute to the GTP site. The 87-residue stretch at 379 to 465 (RRVPTAALNR…RLTMRSQSDA (87 aa)) folds into the KH-like domain. Positions 451–490 (PGTPIRLTMRSQSDANPYKNRKKSTPSRLRKHLGKPSLKG) are disordered. The segment covering 469 to 484 (KNRKKSTPSRLRKHLG) has biased composition (basic residues).

It belongs to the TRAFAC class TrmE-Era-EngA-EngB-Septin-like GTPase superfamily. EngA (Der) GTPase family. As to quaternary structure, associates with the 50S ribosomal subunit.

GTPase that plays an essential role in the late steps of ribosome biogenesis. The protein is GTPase Der of Dinoroseobacter shibae (strain DSM 16493 / NCIMB 14021 / DFL 12).